Consider the following 351-residue polypeptide: GDSL esterase/lipase At3g14820 (351 aa).

An N-terminal signal peptide occupies residues 1–22; that stretch reads MDLHLIGFLLWFFVVQVTTSSA. N-linked (GlcNAc...) asparagine glycosylation occurs at Asn25. Ser39 serves as the catalytic Nucleophile. Catalysis depends on residues Asp325 and His328.

This sequence belongs to the 'GDSL' lipolytic enzyme family.

It localises to the secreted. The chain is GDSL esterase/lipase At3g14820 from Arabidopsis thaliana (Mouse-ear cress).